The following is a 333-amino-acid chain: Holliday junction branch migration complex subunit RuvB (333 aa).

Residues 1–182 form a large ATPase domain (RuvB-L) region; that stretch reads MEERLVSGDV…FGVISRLEYY (182 aa). ATP-binding positions include leucine 21, arginine 22, glycine 63, lysine 66, threonine 67, threonine 68, 129-131, arginine 172, tyrosine 182, and arginine 219; that span reads EDY. Position 67 (threonine 67) interacts with Mg(2+). The small ATPAse domain (RuvB-S) stretch occupies residues 183-253; the sequence is TTEHLTQIVM…LAKEALELLQ (71 aa). The interval 256-333 is head domain (RuvB-H); it reads RLGLDHIDHK…EHFGMEVPKQ (78 aa). Residues arginine 311 and arginine 316 each coordinate DNA.

Belongs to the RuvB family. In terms of assembly, homohexamer. Forms an RuvA(8)-RuvB(12)-Holliday junction (HJ) complex. HJ DNA is sandwiched between 2 RuvA tetramers; dsDNA enters through RuvA and exits via RuvB. An RuvB hexamer assembles on each DNA strand where it exits the tetramer. Each RuvB hexamer is contacted by two RuvA subunits (via domain III) on 2 adjacent RuvB subunits; this complex drives branch migration. In the full resolvosome a probable DNA-RuvA(4)-RuvB(12)-RuvC(2) complex forms which resolves the HJ.

The protein resides in the cytoplasm. It catalyses the reaction ATP + H2O = ADP + phosphate + H(+). Functionally, the RuvA-RuvB-RuvC complex processes Holliday junction (HJ) DNA during genetic recombination and DNA repair, while the RuvA-RuvB complex plays an important role in the rescue of blocked DNA replication forks via replication fork reversal (RFR). RuvA specifically binds to HJ cruciform DNA, conferring on it an open structure. The RuvB hexamer acts as an ATP-dependent pump, pulling dsDNA into and through the RuvAB complex. RuvB forms 2 homohexamers on either side of HJ DNA bound by 1 or 2 RuvA tetramers; 4 subunits per hexamer contact DNA at a time. Coordinated motions by a converter formed by DNA-disengaged RuvB subunits stimulates ATP hydrolysis and nucleotide exchange. Immobilization of the converter enables RuvB to convert the ATP-contained energy into a lever motion, pulling 2 nucleotides of DNA out of the RuvA tetramer per ATP hydrolyzed, thus driving DNA branch migration. The RuvB motors rotate together with the DNA substrate, which together with the progressing nucleotide cycle form the mechanistic basis for DNA recombination by continuous HJ branch migration. Branch migration allows RuvC to scan DNA until it finds its consensus sequence, where it cleaves and resolves cruciform DNA. The sequence is that of Holliday junction branch migration complex subunit RuvB from Geobacillus sp. (strain WCH70).